An 844-amino-acid polypeptide reads, in one-letter code: MSKKGAGSRAKGDKAETLAALQAANEELRAKLTDIQIELQQEKSKVSKVEREKSQELKQVREHEQRKHAVLVTELKTKLHEEKMKELQAVREALLRQHEAELLRVIKIKDNENQRLQALLNTLRDGAPDKVKTVLLCEAKEEAKKGFEVEKVKMQQEISELKGAKKQVEEALTMVIQADKIKAAEIRSVYHLHQEEITRIKKECEREIRRLMEEIRFKDRAVFVLERELGVQAGHAQRLQLQKEALDEQLSQAKEAERHPGSPRRELPYASGAGDASDHSGSPEQQLDEKDARRFQLKIAELSAIIRKLEDRNALLSEERNELLKRLREAESQYKPLLDKNKRLTRKNEDLSHTLRRIESKLKFVTQENIEMRQRAGIIRRPSSLNDLDQSQDEREIDFLKLQIVEQQNLIDELSKTLETAGYVKSVLERDKLLRYRKQRKKMAKLPKPVVVETFFGYDEEASLESDGSSISYQTDRTDQTPCTPEDDLEEGMAKEETELRFRQLTMEYQALQRAYALLQEQVGGTLDAEREVKTREQLQAEIQRAQTRVEDLEKALAEQGQDMKWIEEKQALYRRNQELVEKIKQMETEEARLKHEVQDAKDQNELLEFRILELEERERKSPAINFHHTPFVDGKSPLQVYCEAEGVTDILVTELMKKLDILGDNANLTNEEQVVVIQARTVLTLAEKWLQRIEETESALQRKMVDLESEKELFSKQKGYLDEELDYRKQALDQAHKHILELEAMLYDALQQEAGAKVAELLSEEEREKLKVAVEQWKRQVMSELRERDAQILRERMELLQIAQQRIKELEERIETQKRQIKELEEKFLFLFLFFSLAFILWS.

A coiled-coil region spans residues 8-259 (SRAKGDKAET…LSQAKEAERH (252 aa)). Residues 249–290 (QLSQAKEAERHPGSPRRELPYASGAGDASDHSGSPEQQLDEK) are disordered. A compositionally biased stretch (basic and acidic residues) spans 254–267 (KEAERHPGSPRREL). Positions 270–282 (ASGAGDASDHSGS) are enriched in low complexity. Positions 289–421 (EKDARRFQLK…DELSKTLETA (133 aa)) form a coiled coil. Residue Ser-384 is modified to Phosphoserine. Residues 466 to 483 (SDGSSISYQTDRTDQTPC) show a composition bias toward polar residues. Residues 466–488 (SDGSSISYQTDRTDQTPCTPEDD) form a disordered region. Coiled-coil stretches lie at residues 493 to 621 (MAKE…RERK) and 688 to 833 (EKWL…LFLF).

This sequence belongs to the JAKMIP family.

The protein localises to the golgi apparatus. The chain is Janus kinase and microtubule-interacting protein 3 (Jakmip3) from Mus musculus (Mouse).